Consider the following 138-residue polypeptide: uncharacterized protein (138 aa).

A run of 3 helical transmembrane segments spans residues 12-32, 62-82, and 111-131; these read LHFL…VLPI, LIAV…FSVL, and FHWV…LICS.

The protein resides in the cell membrane. This is an uncharacterized protein from Haemophilus influenzae (strain ATCC 51907 / DSM 11121 / KW20 / Rd).